Consider the following 157-residue polypeptide: Transcription elongation factor GreA (157 aa).

The stretch at 14-37 forms a coiled coil; the sequence is LRKELERLLKRRPLITEAIAEARE.

This sequence belongs to the GreA/GreB family.

Necessary for efficient RNA polymerase transcription elongation past template-encoded arresting sites. The arresting sites in DNA have the property of trapping a certain fraction of elongating RNA polymerases that pass through, resulting in locked ternary complexes. Cleavage of the nascent transcript by cleavage factors such as GreA or GreB allows the resumption of elongation from the new 3'terminus. GreA releases sequences of 2 to 3 nucleotides. The sequence is that of Transcription elongation factor GreA from Vibrio vulnificus (strain CMCP6).